Here is a 519-residue protein sequence, read N- to C-terminus: ATP synthase subunit alpha, mitochondrial (519 aa).

188–195 (GDRQTGKS) contacts ATP.

The protein belongs to the ATPase alpha/beta chains family. F-type ATPases have 2 components, CF(1) - the catalytic core - and CF(0) - the membrane proton channel. CF(1) has five subunits: alpha(3), beta(3), gamma(1), delta(1), epsilon(1). CF(0) has three main subunits: a, b and c.

It is found in the mitochondrion. The protein resides in the mitochondrion inner membrane. In terms of biological role, mitochondrial membrane ATP synthase (F(1)F(0) ATP synthase or Complex V) produces ATP from ADP in the presence of a proton gradient across the membrane which is generated by electron transport complexes of the respiratory chain. F-type ATPases consist of two structural domains, F(1) - containing the extramembraneous catalytic core, and F(0) - containing the membrane proton channel, linked together by a central stalk and a peripheral stalk. During catalysis, ATP synthesis in the catalytic domain of F(1) is coupled via a rotary mechanism of the central stalk subunits to proton translocation. Subunits alpha and beta form the catalytic core in F(1). Rotation of the central stalk against the surrounding alpha(3)beta(3) subunits leads to hydrolysis of ATP in three separate catalytic sites on the beta subunits. Subunit alpha does not bear the catalytic high-affinity ATP-binding sites. The chain is ATP synthase subunit alpha, mitochondrial (atp1) from Dictyostelium citrinum (Slime mold).